A 126-amino-acid chain; its full sequence is Copper resistance protein C (126 aa).

Positions 1–23 (MSILNKAILTGGLVMGVAFSAMA) are cleaved as a signal peptide. His-24 is a Cu(2+) binding site. Cu(+) contacts are provided by Met-63, Met-66, Met-69, His-72, and Met-75. His-115 contacts Cu(2+).

This sequence belongs to the CopC family. In terms of assembly, monomer-dimer equilibrium in solution for the apo protein. Dimerization is significantly enhanced upon binding of copper(I).

The protein resides in the periplasm. Copper-binding protein involved in copper resistance. The sequence is that of Copper resistance protein C from Escherichia coli.